A 513-amino-acid chain; its full sequence is ATP synthase subunit alpha (513 aa).

Position 169–176 (169–176) interacts with ATP; the sequence is GDRQCGKT.

It belongs to the ATPase alpha/beta chains family. F-type ATPases have 2 components, CF(1) - the catalytic core - and CF(0) - the membrane proton channel. CF(1) has five subunits: alpha(3), beta(3), gamma(1), delta(1), epsilon(1). CF(0) has three main subunits: a(1), b(2) and c(9-12). The alpha and beta chains form an alternating ring which encloses part of the gamma chain. CF(1) is attached to CF(0) by a central stalk formed by the gamma and epsilon chains, while a peripheral stalk is formed by the delta and b chains.

The protein resides in the cell inner membrane. It catalyses the reaction ATP + H2O + 4 H(+)(in) = ADP + phosphate + 5 H(+)(out). Functionally, produces ATP from ADP in the presence of a proton gradient across the membrane. The alpha chain is a regulatory subunit. This Burkholderia ambifaria (strain MC40-6) protein is ATP synthase subunit alpha.